We begin with the raw amino-acid sequence, 176 residues long: Ribosome maturation factor RimM (176 aa).

A PRC barrel domain is found at 100–173 (PEEYYDYQLI…RLRIDPPPGL (74 aa)).

This sequence belongs to the RimM family. In terms of assembly, binds ribosomal protein uS19.

It localises to the cytoplasm. In terms of biological role, an accessory protein needed during the final step in the assembly of 30S ribosomal subunit, possibly for assembly of the head region. Essential for efficient processing of 16S rRNA. May be needed both before and after RbfA during the maturation of 16S rRNA. It has affinity for free ribosomal 30S subunits but not for 70S ribosomes. This is Ribosome maturation factor RimM from Acidothermus cellulolyticus (strain ATCC 43068 / DSM 8971 / 11B).